A 348-amino-acid polypeptide reads, in one-letter code: Probable mitochondrial adenine nucleotide transporter BTL1 (348 aa).

3 Solcar repeats span residues 46 to 129, 157 to 241, and 251 to 338; these read SREA…VKRA, SWIS…MKTS, and LSRP…WKDI. Helical transmembrane passes span 52 to 72, 104 to 124, 156 to 176, 213 to 233, 256 to 276, and 321 to 341; these read FLSGALAGAMTKAVLAPLETI, GNEINMIRIIPTQAIELGTFE, ISWISPVAVAGASAGIASTLV, FYAGLGPTLVGMLPYSTCYYF, MLVLGALAGLTASTISFPLEV, and VMPSSGITWVFYEAWKDILLA.

Belongs to the mitochondrial carrier (TC 2.A.29) family.

Its subcellular location is the mitochondrion inner membrane. Functionally, probable mitochondrial adenylate carrier that catalyzes the transport of ATP, ADP and AMP. The polypeptide is Probable mitochondrial adenine nucleotide transporter BTL1 (Arabidopsis thaliana (Mouse-ear cress)).